We begin with the raw amino-acid sequence, 312 residues long: MTYETDTTLMFVAVCEALVGILGNAFIALVNFMGWMKNRKITAIDLILSSLAMSRICLQCIILLDCIILVQYPDTYNRGKEMRIIDFFWTLTNHLSVWFATCLSIFYFFKIANFFHPLFLWIKWRIDKLILRTLLACLILSLCFSLPVTENLTDDFRRCVKTKERINSTLRCKLNKAGYASVKVNLNLVMLFPFSVSLVSFLLLILSLWRHTRQMQLNVTGYNDPSTTAHVKATKAVISFLVLFIVYCLAFLIATSSYFMPESELAVIWGELIALIYPSSHSFILILGNSKLKQASVRVLCRVKTMLKGRKY.

The Extracellular segment spans residues 1 to 9 (MTYETDTTL). Residues 10–30 (MFVAVCEALVGILGNAFIALV) traverse the membrane as a helical segment. Residues 31–49 (NFMGWMKNRKITAIDLILS) lie on the Cytoplasmic side of the membrane. Residues 50 to 70 (SLAMSRICLQCIILLDCIILV) traverse the membrane as a helical segment. The Extracellular portion of the chain corresponds to 71–101 (QYPDTYNRGKEMRIIDFFWTLTNHLSVWFAT). The helical transmembrane segment at 102–122 (CLSIFYFFKIANFFHPLFLWI) threads the bilayer. Topologically, residues 123-128 (KWRIDK) are cytoplasmic. Residues 129 to 149 (LILRTLLACLILSLCFSLPVT) form a helical membrane-spanning segment. Residues 150–187 (ENLTDDFRRCVKTKERINSTLRCKLNKAGYASVKVNLN) lie on the Extracellular side of the membrane. Asparagine 151 and asparagine 167 each carry an N-linked (GlcNAc...) asparagine glycan. The helical transmembrane segment at 188-208 (LVMLFPFSVSLVSFLLLILSL) threads the bilayer. Residues 209 to 235 (WRHTRQMQLNVTGYNDPSTTAHVKATK) are Cytoplasmic-facing. A helical transmembrane segment spans residues 236-256 (AVISFLVLFIVYCLAFLIATS). Residues 257–266 (SYFMPESELA) lie on the Extracellular side of the membrane. The chain crosses the membrane as a helical span at residues 267–287 (VIWGELIALIYPSSHSFILIL). The Cytoplasmic segment spans residues 288–312 (GNSKLKQASVRVLCRVKTMLKGRKY).

It belongs to the G-protein coupled receptor T2R family. In terms of tissue distribution, expressed in subsets of taste receptor cells of the tongue and palate epithelium and exclusively in gustducin-positive cells. Expressed in 15% taste bud cells in circumvallate and foliate papillae but only in 2% in fungiform papillae. Expressed in the duodenum, antrum and fundus (part of the stomach) and in gastric endocrine cells.

Its subcellular location is the membrane. Its function is as follows. Gustducin-coupled receptor implicated in the perception of bitter compounds in the oral cavity and the gastrointestinal tract. Signals through PLCB2 and the calcium-regulated cation channel TRPM5. This is Taste receptor type 2 member 7 (Tas2r7) from Rattus norvegicus (Rat).